Reading from the N-terminus, the 387-residue chain is MNSLQVLTKKVLIENKAFSNYHEDDSFILQQLGLWWENGPIGFCKQCKMVTGGSMLCSDVDSYELDRALVKAVKENQTDLIKLFVLWGAEINFGIVCAKTKKMKDLCIQLGADPKFLDEGLYNMFVYLVKQKKVLLAIDIYYDNILILDSFDSHDFHMLIDFMYNRFILNLDEKEEMTRNTLVLKFWYKFAIDFNLIKPIRYLSKKFPHLDDWRLKTAIYLGNVDEIHHAYFQENIRLDPNHMMSFACIHPWNKLGIYYCFALGADIDNALDILLRFDETNKEINRETGRGISLYIEWGYLSNVYFCIGLGANPYIKKIQDTIKQKNSNIMILLFSRKKRILSPHSVLQNKILDPTDVRKMILTHENTENFYPFSELAVRLIQQANI.

It belongs to the asfivirus MGF 360 family.

In terms of biological role, plays a role in virus cell tropism, and may be required for efficient virus replication in macrophages. The polypeptide is Protein MGF 360-4L (Ornithodoros (relapsing fever ticks)).